Consider the following 517-residue polypeptide: Protein ERGIC-53 (517 aa).

Positions 1–30 (MAVSRRRVPQAGARSFFCALLLSFSQFTGS) are cleaved as a signal peptide. At 31–484 (DGTGGDAAAP…DLPPFPSCLS (454 aa)) the chain is on the lumenal side. In terms of domain architecture, L-type lectin-like spans 52–275 (RRFEYKYSFK…DVLSFLTFQL (224 aa)). Positions 96 and 129 each coordinate a carbohydrate. Ca(2+) contacts are provided by aspartate 160, phenylalanine 162, and asparagine 164. A carbohydrate is bound by residues asparagine 164 and histidine 186. Aspartate 189 lines the Ca(2+) pocket. Cysteine 198 and cysteine 238 are joined by a disulfide. 259–261 (GGL) is a binding site for a carbohydrate. Serine 433 is modified (phosphoserine). A helical membrane pass occupies residues 485 to 505 (TIHFVIFVVVQTVLFVGYIMY). Residues 506–517 (RTQQEAAAKKFF) lie on the Cytoplasmic side of the membrane. Residues 506–517 (RTQQEAAAKKFF) form a mediates interaction with RAB3GAP1, RAB3GAP2 and UBXN6 region. Positions 516-517 (FF) match the ER export motif motif.

As to quaternary structure, exists both as a covalent disulfide-linked homohexamer, and a complex of three disulfide-linked dimers non-covalently kept together. Interacts with MCFD2. May interact with TMEM115. Interacts with RAB3GAP1 and RAB3GAP2. Interacts with UBXN6. Interacts with SERPINA1/alpha1-antitrypsin. Interacts with BET1.

The protein localises to the endoplasmic reticulum-Golgi intermediate compartment membrane. Its subcellular location is the golgi apparatus membrane. The protein resides in the endoplasmic reticulum membrane. Its function is as follows. Mannose-specific lectin. May recognize sugar residues of glycoproteins, glycolipids, or glycosylphosphatidyl inositol anchors and may be involved in the sorting or recycling of proteins, lipids, or both. The LMAN1-MCFD2 complex forms a specific cargo receptor for the ER-to-Golgi transport of selected proteins. This chain is Protein ERGIC-53 (Lman1), found in Mus musculus (Mouse).